Reading from the N-terminus, the 425-residue chain is 2-methylserine hydroxymethyltransferase (425 aa).

Residues L126 and 130–132 (GHL) contribute to the (6S)-5,6,7,8-tetrahydrofolate site. Residue K235 is modified to N6-(pyridoxal phosphate)lysine. Position 251 (E251) interacts with (6S)-5,6,7,8-tetrahydrofolate.

The protein belongs to the SHMT family. Homodimer. Pyridoxal 5'-phosphate serves as cofactor.

The protein resides in the cytoplasm. It catalyses the reaction (6R)-5,10-methylene-5,6,7,8-tetrahydrofolate + D-alanine + H2O = 2-methylserine + (6S)-5,6,7,8-tetrahydrofolate. Its pathway is one-carbon metabolism; tetrahydrofolate interconversion. In terms of biological role, catalyzes the reversible interconversion of alpha-methyl-L-serine to D-alanine with tetrahydrofolate (THF) serving as the one-carbon carrier. Cannot use alpha-methyl-D-serine, L-serine, D-serine or L-alanine. The protein is 2-methylserine hydroxymethyltransferase of Ensifer sp.